The following is a 275-amino-acid chain: Ribosomal RNA small subunit methyltransferase A (275 aa).

S-adenosyl-L-methionine contacts are provided by Asn-20, Leu-22, Gly-47, Glu-68, Asp-90, and Asn-110.

Belongs to the class I-like SAM-binding methyltransferase superfamily. rRNA adenine N(6)-methyltransferase family. RsmA subfamily.

It is found in the cytoplasm. It catalyses the reaction adenosine(1518)/adenosine(1519) in 16S rRNA + 4 S-adenosyl-L-methionine = N(6)-dimethyladenosine(1518)/N(6)-dimethyladenosine(1519) in 16S rRNA + 4 S-adenosyl-L-homocysteine + 4 H(+). Functionally, specifically dimethylates two adjacent adenosines (A1518 and A1519) in the loop of a conserved hairpin near the 3'-end of 16S rRNA in the 30S particle. May play a critical role in biogenesis of 30S subunits. The chain is Ribosomal RNA small subunit methyltransferase A from Chlorobaculum tepidum (strain ATCC 49652 / DSM 12025 / NBRC 103806 / TLS) (Chlorobium tepidum).